The chain runs to 475 residues: Ribulose bisphosphate carboxylase large chain (475 aa).

The propeptide occupies 1 to 2 (MS). N-acetylproline is present on Pro3. At Lys14 the chain carries N6,N6,N6-trimethyllysine. Residues Asn123 and Thr173 each coordinate substrate. Lys175 functions as the Proton acceptor in the catalytic mechanism. A substrate-binding site is contributed by Lys177. Residues Lys201, Asp203, and Glu204 each contribute to the Mg(2+) site. An N6-carboxylysine modification is found at Lys201. His294 acts as the Proton acceptor in catalysis. Positions 327 and 379 each coordinate substrate.

It belongs to the RuBisCO large chain family. Type I subfamily. As to quaternary structure, heterohexadecamer of 8 large chains and 8 small chains; disulfide-linked. The disulfide link is formed within the large subunit homodimers. It depends on Mg(2+) as a cofactor. The disulfide bond which can form in the large chain dimeric partners within the hexadecamer appears to be associated with oxidative stress and protein turnover.

Its subcellular location is the plastid. It is found in the chloroplast. It carries out the reaction 2 (2R)-3-phosphoglycerate + 2 H(+) = D-ribulose 1,5-bisphosphate + CO2 + H2O. The catalysed reaction is D-ribulose 1,5-bisphosphate + O2 = 2-phosphoglycolate + (2R)-3-phosphoglycerate + 2 H(+). RuBisCO catalyzes two reactions: the carboxylation of D-ribulose 1,5-bisphosphate, the primary event in carbon dioxide fixation, as well as the oxidative fragmentation of the pentose substrate in the photorespiration process. Both reactions occur simultaneously and in competition at the same active site. The protein is Ribulose bisphosphate carboxylase large chain of Amaranthus hypochondriacus (Prince-of-Wales feather).